The sequence spans 434 residues: UPF0597 protein CLK_1462 (434 aa).

This sequence belongs to the UPF0597 family.

This is UPF0597 protein CLK_1462 from Clostridium botulinum (strain Loch Maree / Type A3).